We begin with the raw amino-acid sequence, 503 residues long: Putative acyl--CoA ligase YdaB (503 aa).

The protein belongs to the ATP-dependent AMP-binding enzyme family.

The protein is Putative acyl--CoA ligase YdaB (ydaB) of Bacillus subtilis (strain 168).